Reading from the N-terminus, the 85-residue chain is CRISPR-associated endoribonuclease Cas2 (85 aa).

Position 8 (aspartate 8) interacts with Mg(2+).

This sequence belongs to the CRISPR-associated endoribonuclease Cas2 protein family. Homodimer, forms a heterotetramer with a Cas1 homodimer. Mg(2+) serves as cofactor.

Functionally, CRISPR (clustered regularly interspaced short palindromic repeat), is an adaptive immune system that provides protection against mobile genetic elements (viruses, transposable elements and conjugative plasmids). CRISPR clusters contain sequences complementary to antecedent mobile elements and target invading nucleic acids. CRISPR clusters are transcribed and processed into CRISPR RNA (crRNA). Functions as a ssRNA-specific endoribonuclease. Involved in the integration of spacer DNA into the CRISPR cassette. This chain is CRISPR-associated endoribonuclease Cas2, found in Pyrococcus furiosus (strain ATCC 43587 / DSM 3638 / JCM 8422 / Vc1).